Reading from the N-terminus, the 414-residue chain is Chromobox protein homolog 6 (414 aa).

A Chromo domain is found at 11–69 (FAAESIIKRRIRKGRIEYLVKWKGWAIKYSTWEPEENILDSRLIAAFEQKERERELYGP). Position 107 is a phosphoserine (S107). Disordered regions lie at residues 127–152 (HRMS…PISP), 267–308 (APFD…VPNW), and 344–365 (ALEP…PEMS). Positions 267 to 287 (APFDAHSSSSSGCPSPTLQSS) are enriched in low complexity.

As to quaternary structure, component of a PRC1-like complex. Distinct PRC1-like core complexes are composed of a RING1 subunit (RING1B or RING1A), one of the six PCGF proteins (PCGF1-6), one PHC protein (PHC1-3) and one of the CBX proteins (CBX2, CBX4, CBX6, CBX7 or CBX8). Interacts with PCGF1, PCGF2, PCGF3, BMI1, PCGF5, PCGF6, RING1 and RNF2. May interact with H3C15 and H3C1. Interacts (via chromodomain) with single-stranded RNA (ssRNA). In terms of processing, ubiquitinated. Ubiquitination regulates the function of the Polycomb group (PcG) multiprotein PRC1-like complex. Deubiquitinated by USP26. Expressed in mouse embryonic stem cells.

It localises to the nucleus. The protein resides in the chromosome. Component of a Polycomb group (PcG) multiprotein PRC1-like complex, a complex class required to maintain the transcriptionally repressive state of many genes, including Hox genes, throughout development. PcG PRC1 complex acts via chromatin remodeling and modification of histones; it mediates monoubiquitination of histone H2A 'Lys-119', rendering chromatin heritably changed in its expressibility. Possibly contributes to the target selectivity of the PRC1 complex by binding specific regions of chromatin. Recruitment to chromatin might occur in an H3K27me3-independent fashion. May have a PRC1-independent function in embryonic stem cells. This is Chromobox protein homolog 6 (Cbx6) from Mus musculus (Mouse).